Reading from the N-terminus, the 698-residue chain is Glycine--tRNA ligase beta subunit (698 aa).

This sequence belongs to the class-II aminoacyl-tRNA synthetase family. Tetramer of two alpha and two beta subunits.

The protein resides in the cytoplasm. The catalysed reaction is tRNA(Gly) + glycine + ATP = glycyl-tRNA(Gly) + AMP + diphosphate. The polypeptide is Glycine--tRNA ligase beta subunit (Xanthomonas campestris pv. campestris (strain B100)).